The sequence spans 371 residues: 43 kDa relaxation protein (371 aa).

5 disordered regions span residues 1–46 (MASY…GNMP), 150–172 (KEPD…AKNT), 196–221 (RVDS…GQVQ), 263–291 (SERD…FDFE), and 328–371 (IHQE…SFSR). A compositionally biased stretch (basic and acidic residues) spans 22–42 (YIAREGKYAREKDSDLEHKES). Residues 157–168 (QKRHVSGKHRPN) are compositionally biased toward basic residues. The segment covering 196–215 (RVDSRSLKAQGIDREPERHL) has biased composition (basic and acidic residues). Over residues 330-365 (QEMERQRERERLAEKQRQQEKERQRLAEQIRQKPDK) the composition is skewed to basic and acidic residues.

The protein belongs to the MobA/MobL family.

Functionally, this protein is probably required for relaxation complex formation. This chain is 43 kDa relaxation protein, found in Salmonella typhimurium.